The primary structure comprises 395 residues: Probable inactive serine/threonine-protein kinase DDB_G0293746 (395 aa).

The Protein kinase domain maps to 9–395; sequence YSEIDLISDN…ITQFIIDYLF (387 aa). Residues 15 to 23 and Lys-54 each bind ATP; that span reads ISDNPFKNY. The tract at residues 213-266 is disordered; that stretch reads NSSLSSLSSSTSSSSSSSSSTNCNNNTTENNNNNYNNNNNNNNNNNNNNNNNSL.

Belongs to the protein kinase superfamily. Ser/Thr protein kinase family.

This is Probable inactive serine/threonine-protein kinase DDB_G0293746 from Dictyostelium discoideum (Social amoeba).